Here is a 273-residue protein sequence, read N- to C-terminus: Large ribosomal subunit protein uL2cz/uL2cy (273 aa).

2 disordered regions span residues 1-23 and 224-273; these read MAIH…SQVK and NPVD…RRRK. Basic and acidic residues predominate over residues 262–273; that stretch reads KYSDRFILRRRK.

It belongs to the universal ribosomal protein uL2 family. Part of the 50S ribosomal subunit.

It localises to the plastid. The protein resides in the chloroplast. This chain is Large ribosomal subunit protein uL2cz/uL2cy (rpl2-A), found in Acorus calamus var. americanus (American sweet flag).